A 458-amino-acid polypeptide reads, in one-letter code: Probable plasmid replicative DNA helicase (458 aa).

Positions 194 to 458 (KIDYVDGLPT…GKFTIQKEAW (265 aa)) constitute an SF4 helicase domain. 225–232 (ARPAMGKT) is an ATP binding site.

This sequence belongs to the helicase family. DnaB subfamily. Homohexamer.

The enzyme catalyses Couples ATP hydrolysis with the unwinding of duplex DNA at the replication fork by translocating in the 5'-3' direction. This creates two antiparallel DNA single strands (ssDNA). The leading ssDNA polymer is the template for DNA polymerase III holoenzyme which synthesizes a continuous strand.. It carries out the reaction ATP + H2O = ADP + phosphate + H(+). Its function is as follows. A replicative DNA helicase, it participates in initiation and elongation during DNA replication. Travels ahead of the DNA replisome, separating dsDNA into templates for DNA synthesis. A processive ATP-dependent 5'-3' DNA helicase it has DNA-dependent ATPase activity. The chain is Probable plasmid replicative DNA helicase from Chlamydia psittaci (Chlamydophila psittaci).